Here is a 224-residue protein sequence, read N- to C-terminus: C-&gt;U-editing enzyme APOBEC-2 (224 aa).

The tract at residues 1–23 (MAQKEEAAEAAAPASQNGDDLEN) is disordered. Zn(2+) is bound by residues Glu-60 and His-98. In terms of domain architecture, CMP/dCMP-type deaminase spans 64–169 (GRNKTFLCYV…PEVQAALKKL (106 aa)). Catalysis depends on Glu-100, which acts as the Proton donor. Zn(2+) contacts are provided by Cys-128 and Cys-131.

It belongs to the cytidine and deoxycytidylate deaminase family. Homotetramer. It depends on Zn(2+) as a cofactor. As to expression, expressed exclusively in heart and skeletal muscle.

The enzyme catalyses cytidine(6666) in apoB mRNA + H2O + H(+) = uridine(6666) in apoB mRNA + NH4(+). Its function is as follows. Probable C to U editing enzyme whose physiological substrate is not yet known. Does not display detectable apoB mRNA editing. Has a low intrinsic cytidine deaminase activity. May play a role in the epigenetic regulation of gene expression through the process of active DNA demethylation. This is C-&gt;U-editing enzyme APOBEC-2 (Apobec2) from Mus musculus (Mouse).